The primary structure comprises 60 residues: Large ribosomal subunit protein eL37 (60 aa).

Cys19, Cys22, Cys34, and Cys37 together coordinate Zn(2+). The segment at 19–37 (CRRCGRISFHAQKKVCSSC) adopts a C4-type zinc-finger fold.

This sequence belongs to the eukaryotic ribosomal protein eL37 family. It depends on Zn(2+) as a cofactor.

Functionally, binds to the 23S rRNA. The polypeptide is Large ribosomal subunit protein eL37 (Methanoregula boonei (strain DSM 21154 / JCM 14090 / 6A8)).